Here is a 319-residue protein sequence, read N- to C-terminus: F-box only protein 8 (319 aa).

The 44-residue stretch at 68 to 111 (FINLEMLPPELSFTILSYLNATDLCLASCVWQDLANDELLWQGL) folds into the F-box domain. Positions 146–276 (FNANPDEGVN…LILLSIDLTS (131 aa)) constitute an SEC7 domain.

Its function is as follows. May promote guanine-nucleotide exchange on an ARF. Promotes the activation of ARF through replacement of GDP with GTP (Potential). This is F-box only protein 8 (FBXO8) from Homo sapiens (Human).